The primary structure comprises 91 residues: MILIQNAEFELVHNFKDGFNEEAFKARYSDILNKYDYIVGDWGYGQLRLKGFFDDQNQKATFETKISTLDEYIYEYCNFGCAYFVLKRIRK.

Cys77 and Cys81 are joined by a disulfide.

As to quaternary structure, homodimer, probably forms a complex with cognate toxin YutE.

Probable antitoxin component of a putative type VII toxin-antitoxin (TA) system. Probably neutralizes cognate toxin YutE. This is Putative antitoxin YutD (yutD) from Bacillus subtilis (strain 168).